Here is a 272-residue protein sequence, read N- to C-terminus: S-adenosylmethionine decarboxylase proenzyme (272 aa).

The active-site Schiff-base intermediate with substrate; via pyruvic acid is the Ser117. The residue at position 117 (Ser117) is a Pyruvic acid (Ser); by autocatalysis. His122 acts as the Proton acceptor; for processing activity in catalysis. Cys145 serves as the catalytic Proton donor; for catalytic activity.

The protein belongs to the prokaryotic AdoMetDC family. Type 2 subfamily. Heterooctamer of four alpha and four beta chains arranged as a tetramer of alpha/beta heterodimers. It depends on pyruvate as a cofactor. Post-translationally, is synthesized initially as an inactive proenzyme. Formation of the active enzyme involves a self-maturation process in which the active site pyruvoyl group is generated from an internal serine residue via an autocatalytic post-translational modification. Two non-identical subunits are generated from the proenzyme in this reaction, and the pyruvate is formed at the N-terminus of the alpha chain, which is derived from the carboxyl end of the proenzyme. The post-translation cleavage follows an unusual pathway, termed non-hydrolytic serinolysis, in which the side chain hydroxyl group of the serine supplies its oxygen atom to form the C-terminus of the beta chain, while the remainder of the serine residue undergoes an oxidative deamination to produce ammonia and the pyruvoyl group blocking the N-terminus of the alpha chain.

The catalysed reaction is S-adenosyl-L-methionine + H(+) = S-adenosyl 3-(methylsulfanyl)propylamine + CO2. It participates in amine and polyamine biosynthesis; S-adenosylmethioninamine biosynthesis; S-adenosylmethioninamine from S-adenosyl-L-methionine: step 1/1. Its function is as follows. Catalyzes the decarboxylation of S-adenosylmethionine to S-adenosylmethioninamine (dcAdoMet), the propylamine donor required for the synthesis of the polyamines spermine and spermidine from the diamine putrescine. This is S-adenosylmethionine decarboxylase proenzyme from Halorhodospira halophila (strain DSM 244 / SL1) (Ectothiorhodospira halophila (strain DSM 244 / SL1)).